The chain runs to 1342 residues: DNA-directed RNA polymerase subunit beta (1342 aa).

It belongs to the RNA polymerase beta chain family. As to quaternary structure, the RNAP catalytic core consists of 2 alpha, 1 beta, 1 beta' and 1 omega subunit. When a sigma factor is associated with the core the holoenzyme is formed, which can initiate transcription.

It catalyses the reaction RNA(n) + a ribonucleoside 5'-triphosphate = RNA(n+1) + diphosphate. Functionally, DNA-dependent RNA polymerase catalyzes the transcription of DNA into RNA using the four ribonucleoside triphosphates as substrates. In Klebsiella pneumoniae subsp. pneumoniae (strain ATCC 700721 / MGH 78578), this protein is DNA-directed RNA polymerase subunit beta.